A 144-amino-acid chain; its full sequence is 3-dehydroquinate dehydratase (144 aa).

The active-site Proton acceptor is the Tyr-22. Substrate-binding residues include Asn-74, His-80, and Asp-87. His-100 functions as the Proton donor in the catalytic mechanism. Substrate-binding positions include 101-102 (LS) and Arg-111.

This sequence belongs to the type-II 3-dehydroquinase family. In terms of assembly, homododecamer.

It carries out the reaction 3-dehydroquinate = 3-dehydroshikimate + H2O. The protein operates within metabolic intermediate biosynthesis; chorismate biosynthesis; chorismate from D-erythrose 4-phosphate and phosphoenolpyruvate: step 3/7. Catalyzes a trans-dehydration via an enolate intermediate. This Clostridium perfringens (strain ATCC 13124 / DSM 756 / JCM 1290 / NCIMB 6125 / NCTC 8237 / Type A) protein is 3-dehydroquinate dehydratase.